Reading from the N-terminus, the 831-residue chain is Prolactin receptor (831 aa).

The N-terminal stretch at 1–23 (MKQNLISSVQIILLLPLTTVGLT) is a signal peptide. Residues 24–438 (SQSFPGKPKI…EIPNDFRVKD (415 aa)) are Extracellular-facing. Fibronectin type-III domains lie at 30–128 (KPKI…VQPG), 129–232 (SPVN…SPPE), 233–331 (KPTI…VQPD), and 332–433 (PPAN…IPND). C36 and C46 are oxidised to a cystine. N-linked (GlcNAc...) asparagine glycosylation occurs at N59. Residues C75 and C86 are joined by a disulfide bond. N-linked (GlcNAc...) asparagine glycans are attached at residues N91, N100, N112, N132, N262, N303, N315, and N335. Zn(2+) contacts are provided by D414 and H416. The WSXWS motif motif lies at 419–423 (WSEWS). Residues 439-459 (MIVWIVLGVLSSLICLIMSWT) form a helical membrane-spanning segment. Over 460–831 (MVLKGYRMIT…DPSSFMPSFK (372 aa)) the chain is Cytoplasmic. A Box 1 motif motif is present at residues 471-479 (ILPPVPGPK). 2 disordered regions span residues 527–563 (HQLM…SPSL) and 776–831 (HTPT…PSFK). Residues 545–554 (TLKETDRDSG) are compositionally biased toward basic and acidic residues. Residues 777–803 (TPTSQEEPAKETSQNPQQGQVETNMSY) show a composition bias toward polar residues.

Belongs to the type I cytokine receptor family. Type 1 subfamily.

Its subcellular location is the membrane. In terms of biological role, this is a receptor for the anterior pituitary hormone prolactin. The chain is Prolactin receptor (PRLR) from Meleagris gallopavo (Wild turkey).